The sequence spans 239 residues: Transcriptional regulatory protein DcuR (239 aa).

The Response regulatory domain occupies 3 to 121; that stretch reads NVLIIDDDAM…RFEEALTGWR (119 aa). A 4-aspartylphosphate modification is found at aspartate 56. Residues 181 to 200 constitute a DNA-binding region (H-T-H motif); the sequence is TDELANEVNISRVSCRKYLI.

In terms of processing, phosphorylated and activated by DcuS.

It is found in the cytoplasm. In terms of biological role, member of the two-component regulatory system DcuR/DcuS. Involved in the C4-dicarboxylate-stimulated regulation of the genes encoding the anaerobic fumarate respiratory system (frdABCD; nuoAN; dcuB; dcuC; sdhCDAB; etc.). Weakly regulates the aerobic C4-dicarboxylate transporter dctA. The polypeptide is Transcriptional regulatory protein DcuR (dcuR) (Escherichia coli O157:H7).